The chain runs to 622 residues: DNA mismatch repair protein MutL (622 aa).

Belongs to the DNA mismatch repair MutL/HexB family.

Functionally, this protein is involved in the repair of mismatches in DNA. It is required for dam-dependent methyl-directed DNA mismatch repair. May act as a 'molecular matchmaker', a protein that promotes the formation of a stable complex between two or more DNA-binding proteins in an ATP-dependent manner without itself being part of a final effector complex. The polypeptide is DNA mismatch repair protein MutL (Prosthecochloris aestuarii (strain DSM 271 / SK 413)).